Consider the following 997-residue polypeptide: Sarcoplasmic/endoplasmic reticulum calcium ATPase 2 (997 aa).

The Cytoplasmic portion of the chain corresponds to 1 to 48 (MENAHTKTVEEVLGYFGVNESTGLSLEQVKKLKERWGSNELPAEEGKT). Phosphoserine is present on Ser38. Residues 49–69 (LLELVIEQFEDLLVRILLLAA) traverse the membrane as a helical segment. Over 70 to 89 (CISFVLAWFEEGEETITAFV) the chain is Lumenal. The helical transmembrane segment at 90-110 (EPFVILLILVANAIVGVWQER) threads the bilayer. The Cytoplasmic segment spans residues 111–253 (NAENAIEALK…QERTPLQQKL (143 aa)). The chain crosses the membrane as a helical span at residues 254-273 (DEFGEQLSKVISLICIAVWI). The Lumenal portion of the chain corresponds to 274–295 (INIGHFNDPVHGGSWIRGAIYY). 3'-nitrotyrosine is present on residues Tyr294 and Tyr295. The helical transmembrane segment at 296–313 (FKIAVALAVAAIPEGLPA) threads the bilayer. The Ca(2+) site is built by Val304, Ala305, Ile307, and Glu309. Residues 314–756 (VITTCLALGT…EEGRAIYNNM (443 aa)) lie on the Cytoplasmic side of the membrane. Asp351 functions as the 4-aspartylphosphate intermediate in the catalytic mechanism. Mg(2+)-binding residues include Asp351 and Thr353. Residue Thr353 participates in ATP binding. Residue Thr441 is modified to Phosphothreonine. ATP contacts are provided by Glu442, Arg489, and Lys514. Ser531 is subject to Phosphoserine. Residue Arg559 participates in ATP binding. The segment at 575-594 (MNLEDSANFIKYETNLTFVG) is interaction with HAX1. Phosphoserine is present on Ser580. 3 residues coordinate ATP: Thr624, Gly625, and Asp626. Residues Ser661 and Ser663 each carry the phosphoserine modification. Residues Arg677 and Lys683 each contribute to the ATP site. A Mg(2+)-binding site is contributed by Asp702. Residue Asn705 participates in ATP binding. The helical transmembrane segment at 757 to 776 (KQFIRYLISSNVGEVVCIFL) threads the bilayer. The Ca(2+) site is built by Asn767 and Glu770. At 777–786 (TAALGFPEAL) the chain is on the lumenal side. Residues 787-807 (IPVQLLWVNLVTDGLPATALG) traverse the membrane as a helical segment. Residues 787–807 (IPVQLLWVNLVTDGLPATALG) are interaction with PLN. An interaction with TMEM64 and PDIA3 region spans residues 788-997 (PVQLLWVNLV…RNYLEPAILE (210 aa)). Residues Asn795, Thr798, and Asp799 each contribute to the Ca(2+) site. At 808 to 827 (FNPPDLDIMNKPPRNPKEPL) the chain is on the cytoplasmic side. Residues 828 to 850 (ISGWLFFRYLAIGCYVGAATVGA) form a helical membrane-spanning segment. Over 851-896 (AAWWFIAADGGPRVSFYQLSHFLQCKDDNPDFEGVDCAIFESPYPM) the chain is Lumenal. Cys875 and Cys887 are oxidised to a cystine. The helical transmembrane segment at 897-916 (TMALSVLVTIEMCNALNSLS) threads the bilayer. Glu907 is a binding site for Ca(2+). Residues 917 to 929 (ENQSLLRMPPWEN) are Cytoplasmic-facing. A helical membrane pass occupies residues 930 to 948 (IWLVGSICLSMSLHFLILY). The tract at residues 931–942 (WLVGSICLSMSL) is interaction with PLN. Topologically, residues 949-963 (VEPLPLIFQITPLNL) are lumenal. Residues 964 to 984 (TQWLMVLKISLPVILMDETLK) traverse the membrane as a helical segment. Residues 985–997 (FVARNYLEPAILE) lie on the Cytoplasmic side of the membrane.

Belongs to the cation transport ATPase (P-type) (TC 3.A.3) family. Type IIA subfamily. As to quaternary structure, interacts with sarcolipin (SLN); the interaction inhibits ATP2A2 Ca(2+) affinity. Interacts with phospholamban (PLN); the interaction inhibits ATP2A2 Ca(2+) affinity. Interacts with myoregulin (MRLN). Interacts with ARLN and ERLN; the interactions inhibit ATP2A2 Ca(2+) affinity. Interacts with STRIT1/DWORF; the interaction results in activation of ATP2A2. Interacts with the monomeric forms of SLN, PLN, ARLN, ERLN and STRI1/DWORF. Interacts with HAX1. Interacts with S100A8 and S100A9. Interacts with SLC35G1 and STIM1. Interacts with TMEM203. Interacts with TMEM64 and PDIA3. Interacts with TMX1. Interacts with TMX2. Interacts with VMP1; VMP1 competes with PLN and SLN to prevent them from forming an inhibitory complex with ATP2A2. Interacts with ULK1. Interacts with S100A1 in a Ca(2+)-dependent manner. Interacts with TUNAR. Interacts with FLVCR2; this interaction occurs in the absence of heme and promotes ATP2A2 proteasomal degradation; this complex is dissociated upon heme binding. Interacts with FNIP1. Interacts with TRAM2 (via C-terminus). Mg(2+) is required as a cofactor. Nitrated under oxidative stress. Nitration on the two tyrosine residues inhibits catalytic activity. In terms of processing, serotonylated on Gln residues by TGM2 in response to hypoxia, leading to its inactivation. Isoform 1 is expressed in the heart.

The protein localises to the endoplasmic reticulum membrane. It localises to the sarcoplasmic reticulum membrane. It carries out the reaction Ca(2+)(in) + ATP + H2O = Ca(2+)(out) + ADP + phosphate + H(+). Has different conformational states with differential Ca2+ affinity. The E1 conformational state (active form) shows high Ca(2+) affinity, while the E2 state exhibits low Ca(2+) affinity. Binding of ATP allosterically increases its affinity for subsequent binding of Ca2+. Reversibly inhibited by phospholamban (PLN) at low calcium concentrations. PLN inhibits ATP2A2 Ca(2+) affinity by disrupting its allosteric activation by ATP. Inhibited by sarcolipin (SLN) and myoregulin (MRLN). The inhibition is blocked by VMP1. Enhanced by STRIT1/DWORF; STRIT1 increases activity by displacing sarcolipin (SLN), phospholamban (PLN) and myoregulin (MRLN). Stabilizes SERCA2 in its E2 state. This magnesium-dependent enzyme catalyzes the hydrolysis of ATP coupled with the translocation of calcium from the cytosol to the sarcoplasmic reticulum lumen. Involved in autophagy in response to starvation. Upon interaction with VMP1 and activation, controls ER-isolation membrane contacts for autophagosome formation. Also modulates ER contacts with lipid droplets, mitochondria and endosomes. In coordination with FLVCR2 mediates heme-stimulated switching from mitochondrial ATP synthesis to thermogenesis. Its function is as follows. Involved in the regulation of the contraction/relaxation cycle. Acts as a regulator of TNFSF11-mediated Ca(2+) signaling pathways via its interaction with TMEM64 which is critical for the TNFSF11-induced CREB1 activation and mitochondrial ROS generation necessary for proper osteoclast generation. Association between TMEM64 and SERCA2 in the ER leads to cytosolic Ca(2+) spiking for activation of NFATC1 and production of mitochondrial ROS, thereby triggering Ca(2+) signaling cascades that promote osteoclast differentiation and activation. This is Sarcoplasmic/endoplasmic reticulum calcium ATPase 2 (ATP2A2) from Felis catus (Cat).